Consider the following 158-residue polypeptide: NAD(P)H-quinone oxidoreductase subunit N (158 aa).

It belongs to the complex I NdhN subunit family. NDH-1 can be composed of about 15 different subunits; different subcomplexes with different compositions have been identified which probably have different functions.

It localises to the cellular thylakoid membrane. The catalysed reaction is a plastoquinone + NADH + (n+1) H(+)(in) = a plastoquinol + NAD(+) + n H(+)(out). It catalyses the reaction a plastoquinone + NADPH + (n+1) H(+)(in) = a plastoquinol + NADP(+) + n H(+)(out). NDH-1 shuttles electrons from an unknown electron donor, via FMN and iron-sulfur (Fe-S) centers, to quinones in the respiratory and/or the photosynthetic chain. The immediate electron acceptor for the enzyme in this species is believed to be plastoquinone. Couples the redox reaction to proton translocation, and thus conserves the redox energy in a proton gradient. Cyanobacterial NDH-1 also plays a role in inorganic carbon-concentration. This chain is NAD(P)H-quinone oxidoreductase subunit N, found in Prochlorococcus marinus (strain MIT 9301).